Reading from the N-terminus, the 245-residue chain is AP-1-like transcription factor YAP5 (245 aa).

The span at 34 to 47 (LPHRAAQRRKRVHR) shows a compositional bias: basic residues. The disordered stretch occupies residues 34–77 (LPHRAAQRRKRVHRLHEDYETEENDEELQKKKRQNRDAQRAYRE). Residues 58 to 121 (DEELQKKKRQ…QAKESENHAL (64 aa)) enclose the bZIP domain. The interval 63 to 82 (KKKRQNRDAQRAYRERKNNK) is basic motif. Over residues 68–77 (NRDAQRAYRE) the composition is skewed to basic and acidic residues. The segment at 86-114 (LEETIESLSKVVKNYETKLNRLQNELQAK) is leucine-zipper.

It belongs to the bZIP family. YAP subfamily. As to quaternary structure, homodimer.

The protein resides in the cytoplasm. It is found in the nucleus. Transcription activator involved in the regulation of genes expressed in response to environmental changes and metabolic requirements. According to genome-wide promoter binding and gene expression studies it is a coregulator for the expression of ribosomal genes, while its own expression is induced by the cell cycle specific activator SBF (SWI4-SWI6). The protein is AP-1-like transcription factor YAP5 (YAP5) of Saccharomyces cerevisiae (strain ATCC 204508 / S288c) (Baker's yeast).